An 852-amino-acid polypeptide reads, in one-letter code: Potassium voltage-gated channel subfamily KQT member 2 (852 aa).

Residues 1-90 (MVQKSRNGGV…LYNVLERPRG (90 aa)) lie on the Cytoplasmic side of the membrane. Position 52 is a phosphoserine; by PKA (serine 52). A helical membrane pass occupies residues 91-113 (WAFIYHAYVFLLVFSCLVLSVFS). The Extracellular segment spans residues 114–123 (TIKEYEKSSE). Residues 124-145 (GALYILEIVTIVVFGVEYFVRI) form a helical membrane-spanning segment. Residues 146 to 163 (WAAGCCCRYRGWRGRLKF) are Cytoplasmic-facing. A helical transmembrane segment spans residues 164-183 (ARKPFCVIDIMVLIASIAVL). Residues 184–196 (AAGSQGNVFATSA) are Extracellular-facing. The chain crosses the membrane as a helical; Voltage-sensor span at residues 197 to 215 (LRSLRFLQILRMIRMDRRG). Residue arginine 214 participates in a 1,2-diacyl-sn-glycero-3-phospho-(1D-myo-inositol-4,5-bisphosphate) binding. Residues 216-227 (GTWKLLGSVVYA) are Cytoplasmic-facing. Positions 222–323 (GSVVYAHSKE…SGFALKVQEQ (102 aa)) are mediates interaction with SLC5A3. The helical transmembrane segment at 228–253 (HSKELVTAWYIGFLCLILASFLVYLA) threads the bilayer. Lysine 230 contacts a 1,2-diacyl-sn-glycero-3-phospho-(1D-myo-inositol-4,5-bisphosphate). At 254–263 (EKGENDHFDT) the chain is on the extracellular side. The segment at residues 264-276 (YADALWWGLITLT) is an intramembrane region (pore-forming). A Selectivity filter motif is present at residues 277–282 (TIGYGD). The Extracellular portion of the chain corresponds to 277–287 (TIGYGDKYPQT). A helical transmembrane segment spans residues 288–314 (WNGRLLAATFTLIGVSFFALPAGILGS). At 315-852 (GFALKVQEQH…GDVAWAGPRK (538 aa)) the chain is on the cytoplasmic side. A mediates interaction with calmodulin region spans residues 317 to 522 (ALKVQEQHRQ…EDLTPGLKVS (206 aa)). Lysine 327 contacts a 1,2-diacyl-sn-glycero-3-phospho-(1D-myo-inositol-4,5-bisphosphate). The tract at residues 404–469 (TFRKEPQPEP…SKVPKSWSFG (66 aa)) is disordered. Residues 440-457 (PQAQTVRRSPSADQSLDD) are compositionally biased toward polar residues. Phosphoserine occurs at positions 448, 450, 454, 458, 460, and 489. 3 disordered regions span residues 579 to 601 (GPTITDKDRTKGPAETELPEDPS), 643 to 662 (GAKEPEPAPPYHSPEDSRDH), and 672 to 718 (IVRS…DHGS). Over residues 583 to 592 (TDKDRTKGPA) the composition is skewed to basic and acidic residues. Serine 655 bears the Phosphoserine mark. Residues serine 781 and serine 783 each carry the phosphoserine modification. The segment at 818–852 (ESDTDSDLCTPCGPPPRSATGEGPFGDVAWAGPRK) is disordered.

The protein belongs to the potassium channel family. KQT (TC 1.A.1.15) subfamily. Kv7.2/KCNQ2 sub-subfamily. In terms of assembly, heterotetramer with KCNQ3; forms heterotetrameric M-channel responsible for the M-current. Homotetrameric; forms a functional homotetrameric channel resulting in the expression of a small M-current. Interacts with calmodulin; the interaction is calcium-independent, constitutive and participates in the proper assembly of a functional M-channel. May associate with KCNE2. Interacts with IQCJ-SCHIP1. Interacts (via the pore module) with SLC5A3/SMIT1; forms a coregulatory complex that alters ion selectivity, voltage dependence and gating kinetics of the channel. Interacts with AKAP5; the interaction may help KCNQ2 channel complex to retain calcium-bound calmodulin. KCNQ2/KCNQ3 heteromeric current can be increased by intracellular cyclic AMP, an effect that depends on phosphorylation of Ser-52 in the N-terminal region. Post-translationally, KCNQ2/KCNQ3 are ubiquitinated by NEDD4L. Ubiquitination leads to protein degradation. Degradation induced by NEDD4L is inhibited by USP36. Expressed in brain and sympathetic ganglia. In brain, expressed in cortex, hippocampus, and cerebellum. In sympathetic ganglia, expressed at lower levels in celiac ganglia and superior mesenteric ganglia than in superior cervical ganglia.

The protein localises to the cell membrane. It carries out the reaction K(+)(in) = K(+)(out). It catalyses the reaction Rb(+)(in) = Rb(+)(out). The catalysed reaction is Cs(+)(in) = Cs(+)(out). The enzyme catalyses Na(+)(in) = Na(+)(out). Phosphatidylinositol-4,5-bisphosphate (PIP2) potentiates the activation of KCNQ channels by enhancing the electro-mechanical coupling of the voltage-sensing domain (VSD) and the pore-forming domain (PD). In the closed state of the channel, PIP2 is anchored at the S2-S3 loop; upon channel activation, PIP2 interacts with the S4-S5 linker and is involved in channel gating. Calcium suppresses KCNQ2 and KCNQ2-KCNQ3 channel currents, with calcium-bound calmodulin inducing a change in channel configuration which leads to the reduction of channel affinity for PIP2 and subsequent current suppression. In terms of biological role, pore-forming subunit of the voltage-gated potassium (Kv) M-channel which is responsible for the M-current, a key controller of neuronal excitability. M-channel is composed of pore-forming subunits KCNQ2 and KCNQ3 assembled as heterotetramers. The native M-current has a slowly activating and deactivating potassium conductance which plays a critical role in determining the subthreshold electrical excitability of neurons as well as the responsiveness to synaptic inputs. M-channel is selectively permeable in vitro to other cations besides potassium, in decreasing order of affinity K(+) &gt; Rb(+) &gt; Cs(+) &gt; Na(+). M-channel association with SLC5A3/SMIT1 alters channel ion selectivity, increasing Na(+) and Cs(+) permeation relative to K(+). Suppressed by activation of the muscarinic acetylcholine receptor CHRM1. The protein is Potassium voltage-gated channel subfamily KQT member 2 of Rattus norvegicus (Rat).